A 311-amino-acid chain; its full sequence is Thioredoxin reductase (311 aa).

FAD is bound by residues 15–18 (SGPA), 37–44 (EGTQFGGA), asparagine 53, and valine 86. Cysteine 137 and cysteine 140 form a disulfide bridge. Residues serine 158, histidine 177, arginine 183, isoleucine 240, and tyrosine 260 each contribute to the NADP(+) site. Residues aspartate 280 and 287–290 (RQAI) contribute to the FAD site. Arginine 287 is an NADP(+) binding site.

It belongs to the class-II pyridine nucleotide-disulfide oxidoreductase family. Homodimer. FAD is required as a cofactor.

The protein resides in the cytoplasm. It carries out the reaction [thioredoxin]-dithiol + NADP(+) = [thioredoxin]-disulfide + NADPH + H(+). The chain is Thioredoxin reductase from Mycolicibacterium smegmatis (Mycobacterium smegmatis).